A 395-amino-acid polypeptide reads, in one-letter code: L-methionine gamma-lyase (395 aa).

Residues 56 to 58 (YTR) and 86 to 87 (GM) each bind pyridoxal 5'-phosphate. Residue Tyr111 coordinates substrate. Residue 206 to 208 (SAT) coordinates pyridoxal 5'-phosphate. Lys209 is modified (N6-(pyridoxal phosphate)lysine). Arg373 lines the substrate pocket.

The protein belongs to the trans-sulfuration enzymes family. L-methionine gamma-lyase subfamily. Homotetramer. Pyridoxal 5'-phosphate is required as a cofactor.

The enzyme catalyses L-methionine + H2O = methanethiol + 2-oxobutanoate + NH4(+). It carries out the reaction L-homocysteine + H2O = 2-oxobutanoate + hydrogen sulfide + NH4(+) + H(+). The catalysed reaction is L-cysteine + H2O = hydrogen sulfide + pyruvate + NH4(+) + H(+). Functionally, catalyzes the alpha,gamma-elimination of L-methionine to produce methanethiol, 2-oxobutanoate and ammonia, and that of L-homocysteine. Can also use L-cysteine as substrate, catalyzing its alpha,beta-elimination; this activity seems to only minimally contribute to the production of hydrogen sulfide (H2S) by F.nucleatum in the oral cavity, which is toxic for a large variety of cells in periodontal regions. The protein is L-methionine gamma-lyase of Fusobacterium nucleatum subsp. nucleatum (strain ATCC 25586 / DSM 15643 / BCRC 10681 / CIP 101130 / JCM 8532 / KCTC 2640 / LMG 13131 / VPI 4355).